The following is a 217-amino-acid chain: Carboxylesterase Culp1 (217 aa).

A signal peptide spans 1–32; that stretch reads MTPRSLVRIVGVVVATTLALVSAPAGGRAAHA. Cys-35 and Cys-107 are joined by a disulfide. The Nucleophile role is filled by Ser-118. A disulfide bond links Cys-177 and Cys-184. Asp-181 is a catalytic residue. His-193 acts as the Proton donor/acceptor in catalysis.

This sequence belongs to the cutinase family.

It localises to the secreted. It catalyses the reaction a fatty acid ester + H2O = an aliphatic alcohol + a fatty acid + H(+). Its function is as follows. Shows esterase activity, with a preference for short- and medium-chain fatty acids. The sequence is that of Carboxylesterase Culp1 from Mycobacterium bovis (strain ATCC BAA-935 / AF2122/97).